Here is a 249-residue protein sequence, read N- to C-terminus: 2,3-bisphosphoglycerate-dependent phosphoglycerate mutase (249 aa).

Substrate contacts are provided by residues 8 to 15 (RHGESVWN), 21 to 22 (TG), Arg60, 87 to 90 (ERHY), Lys98, 114 to 115 (RR), and 183 to 184 (GN). Catalysis depends on His9, which acts as the Tele-phosphohistidine intermediate. The active-site Proton donor/acceptor is Glu87.

The protein belongs to the phosphoglycerate mutase family. BPG-dependent PGAM subfamily.

The catalysed reaction is (2R)-2-phosphoglycerate = (2R)-3-phosphoglycerate. Its pathway is carbohydrate degradation; glycolysis; pyruvate from D-glyceraldehyde 3-phosphate: step 3/5. In terms of biological role, catalyzes the interconversion of 2-phosphoglycerate and 3-phosphoglycerate. In Chloroherpeton thalassium (strain ATCC 35110 / GB-78), this protein is 2,3-bisphosphoglycerate-dependent phosphoglycerate mutase.